A 221-amino-acid chain; its full sequence is Sugar transporter SWEET1 (221 aa).

Helical transmembrane passes span 3-23 (AGGF…LGMF), 42-62 (VQFL…SYGA), 68-88 (ILIV…LAYL), 96-116 (VVLL…GYFW), 129-149 (LGLF…ADLA), 160-180 (LSYP…LYGF), and 186-206 (YIMV…WLFW). The 85-residue stretch at 10-94 (LIYGACVVFT…LAYLHYCPRK (85 aa)) folds into the MtN3/slv 1 domain. One can recognise a MtN3/slv 2 domain in the interval 127–212 (QQLGLFCSVF…WLFWKYPQEQ (86 aa)). The segment at 149–221 (AKVIQTKSTQ…QDRNYWLLQT (73 aa)) is mediates interaction with TRPV2.

This sequence belongs to the SWEET sugar transporter family. In terms of assembly, interacts with TRPV2; the interaction probably occurs intracellularly and depends on TRPV2 N-glycosylation. As to expression, ubiquitously expressed with highest expression in oviduct, epididymis and intestine.

It is found in the golgi apparatus membrane. It localises to the cell membrane. In terms of biological role, mediates sugar transport across membranes. May stimulate V(D)J recombination by the activation of RAG1. This is Sugar transporter SWEET1 (SLC50A1) from Homo sapiens (Human).